Consider the following 281-residue polypeptide: Probable endonuclease 4 (281 aa).

The Zn(2+) site is built by His69, His109, Glu145, Asp179, His182, His216, Asp229, His231, and Glu261.

Belongs to the AP endonuclease 2 family. Zn(2+) serves as cofactor.

The catalysed reaction is Endonucleolytic cleavage to 5'-phosphooligonucleotide end-products.. Endonuclease IV plays a role in DNA repair. It cleaves phosphodiester bonds at apurinic or apyrimidinic (AP) sites, generating a 3'-hydroxyl group and a 5'-terminal sugar phosphate. The protein is Probable endonuclease 4 of Proteus mirabilis (strain HI4320).